A 481-amino-acid polypeptide reads, in one-letter code: Eukaryotic translation initiation factor 3 subunit L (481 aa).

The segment at 1–22 is disordered; sequence MSVDARTAYPGSRPPANMQDES. Positions 262-457 constitute a PCI domain; sequence DAIRTFSHIL…DLDYAIEGNL (196 aa).

Belongs to the eIF-3 subunit L family. Component of the eukaryotic translation initiation factor 3 (eIF-3) complex.

Its subcellular location is the cytoplasm. Component of the eukaryotic translation initiation factor 3 (eIF-3) complex, which is involved in protein synthesis of a specialized repertoire of mRNAs and, together with other initiation factors, stimulates binding of mRNA and methionyl-tRNAi to the 40S ribosome. The eIF-3 complex specifically targets and initiates translation of a subset of mRNAs involved in cell proliferation. The protein is Eukaryotic translation initiation factor 3 subunit L of Coccidioides immitis (strain RS) (Valley fever fungus).